Reading from the N-terminus, the 103-residue chain is Co-chaperonin GroES (103 aa).

The protein belongs to the GroES chaperonin family. Heptamer of 7 subunits arranged in a ring. Interacts with the chaperonin GroEL.

The protein resides in the cytoplasm. Functionally, together with the chaperonin GroEL, plays an essential role in assisting protein folding. The GroEL-GroES system forms a nano-cage that allows encapsulation of the non-native substrate proteins and provides a physical environment optimized to promote and accelerate protein folding. GroES binds to the apical surface of the GroEL ring, thereby capping the opening of the GroEL channel. The polypeptide is Co-chaperonin GroES (Prochlorococcus marinus (strain MIT 9211)).